The sequence spans 192 residues: Small ribosomal subunit protein uS4B (192 aa).

Phosphoserine occurs at positions 89 and 179. The S4 RNA-binding domain occupies 107-181; the sequence is RRLQTQVFKL…CKRKRLRSQQ (75 aa). The interval 166 to 192 is disordered; sequence GGRPGRCKRKRLRSQQEGGEGEEAEEE.

It belongs to the universal ribosomal protein uS4 family. Component of the small ribosomal subunit (SSU). Mature yeast ribosomes consist of a small (40S) and a large (60S) subunit. The 40S small subunit contains 1 molecule of ribosomal RNA (18S rRNA) and at least 33 different proteins. The large 60S subunit contains 3 rRNA molecules (25S, 5.8S and 5S rRNA) and at least 46 different proteins. Interacts with snoRNA U3. uS11 interacts with MPP10. Component of the ribosomal small subunit (SSU) processome composed of at least 40 protein subunits and snoRNA U3.

It is found in the cytoplasm. In terms of biological role, component of the ribosome, a large ribonucleoprotein complex responsible for the synthesis of proteins in the cell. The small ribosomal subunit (SSU) binds messenger RNAs (mRNAs) and translates the encoded message by selecting cognate aminoacyl-transfer RNA (tRNA) molecules. The large subunit (LSU) contains the ribosomal catalytic site termed the peptidyl transferase center (PTC), which catalyzes the formation of peptide bonds, thereby polymerizing the amino acids delivered by tRNAs into a polypeptide chain. The nascent polypeptides leave the ribosome through a tunnel in the LSU and interact with protein factors that function in enzymatic processing, targeting, and the membrane insertion of nascent chains at the exit of the ribosomal tunnel. uS4 is involved in nucleolar processing of pre-18S ribosomal RNA and ribosome assembly. This is Small ribosomal subunit protein uS4B (rps902) from Schizosaccharomyces pombe (strain 972 / ATCC 24843) (Fission yeast).